We begin with the raw amino-acid sequence, 425 residues long: Serine--tRNA ligase (425 aa).

Residue 231 to 233 participates in L-serine binding; the sequence is TAE. 262–264 contacts ATP; the sequence is RSE. Residue Glu-285 participates in L-serine binding. 349-352 is an ATP binding site; that stretch reads EISS. Ser-385 is an L-serine binding site.

It belongs to the class-II aminoacyl-tRNA synthetase family. Type-1 seryl-tRNA synthetase subfamily. In terms of assembly, homodimer. The tRNA molecule binds across the dimer.

It localises to the cytoplasm. The catalysed reaction is tRNA(Ser) + L-serine + ATP = L-seryl-tRNA(Ser) + AMP + diphosphate + H(+). It catalyses the reaction tRNA(Sec) + L-serine + ATP = L-seryl-tRNA(Sec) + AMP + diphosphate + H(+). The protein operates within aminoacyl-tRNA biosynthesis; selenocysteinyl-tRNA(Sec) biosynthesis; L-seryl-tRNA(Sec) from L-serine and tRNA(Sec): step 1/1. In terms of biological role, catalyzes the attachment of serine to tRNA(Ser). Is also able to aminoacylate tRNA(Sec) with serine, to form the misacylated tRNA L-seryl-tRNA(Sec), which will be further converted into selenocysteinyl-tRNA(Sec). In Halalkalibacterium halodurans (strain ATCC BAA-125 / DSM 18197 / FERM 7344 / JCM 9153 / C-125) (Bacillus halodurans), this protein is Serine--tRNA ligase.